Reading from the N-terminus, the 323-residue chain is Aspartate carbamoyltransferase catalytic subunit (323 aa).

Carbamoyl phosphate contacts are provided by R65 and T66. Position 93 (K93) interacts with L-aspartate. Carbamoyl phosphate is bound by residues R115, H149, and Q152. Positions 182 and 237 each coordinate L-aspartate. 2 residues coordinate carbamoyl phosphate: G278 and P279.

It belongs to the aspartate/ornithine carbamoyltransferase superfamily. ATCase family. Heterododecamer (2C3:3R2) of six catalytic PyrB chains organized as two trimers (C3), and six regulatory PyrI chains organized as three dimers (R2).

The catalysed reaction is carbamoyl phosphate + L-aspartate = N-carbamoyl-L-aspartate + phosphate + H(+). It participates in pyrimidine metabolism; UMP biosynthesis via de novo pathway; (S)-dihydroorotate from bicarbonate: step 2/3. In terms of biological role, catalyzes the condensation of carbamoyl phosphate and aspartate to form carbamoyl aspartate and inorganic phosphate, the committed step in the de novo pyrimidine nucleotide biosynthesis pathway. This Aromatoleum aromaticum (strain DSM 19018 / LMG 30748 / EbN1) (Azoarcus sp. (strain EbN1)) protein is Aspartate carbamoyltransferase catalytic subunit.